Reading from the N-terminus, the 533-residue chain is Putative replication factor C large subunit (533 aa).

A compositionally biased stretch (polar residues) spans 1 to 11 (MSKTAKNTKTI). The interval 1-31 (MSKTAKNTKTIKSVKSVNKDNKPNKDNKDDK) is disordered. Over residues 17–31 (VNKDNKPNKDNKDDK) the composition is skewed to basic and acidic residues.

Belongs to the activator 1 large subunit family.

Functionally, part of the RFC clamp loader complex which loads the PCNA sliding clamp onto DNA. The chain is Putative replication factor C large subunit from Acanthamoeba polyphaga (Amoeba).